Reading from the N-terminus, the 230-residue chain is ATP synthase subunit a (230 aa).

Transmembrane regions (helical) follow at residues 17–37 (LPIT…FIMA), 78–98 (IFPF…IGVI), 107–127 (DLSV…WFGI), 165–187 (LFGN…GFLV), and 198–218 (EAII…AGGI).

It belongs to the ATPase A chain family. In terms of assembly, F-type ATPases have 2 components, CF(1) - the catalytic core - and CF(0) - the membrane proton channel. CF(1) has five subunits: alpha(3), beta(3), gamma(1), delta(1), epsilon(1). CF(0) has three main subunits: a(1), b(2) and c(9-12). The alpha and beta chains form an alternating ring which encloses part of the gamma chain. CF(1) is attached to CF(0) by a central stalk formed by the gamma and epsilon chains, while a peripheral stalk is formed by the delta and b chains.

Its subcellular location is the cell inner membrane. Functionally, key component of the proton channel; it plays a direct role in the translocation of protons across the membrane. This Legionella pneumophila (strain Corby) protein is ATP synthase subunit a.